The following is a 306-amino-acid chain: Pantothenate kinase (306 aa).

Position 91–98 (91–98) interacts with ATP; sequence GSVAVGKS.

Belongs to the prokaryotic pantothenate kinase family.

Its subcellular location is the cytoplasm. The enzyme catalyses (R)-pantothenate + ATP = (R)-4'-phosphopantothenate + ADP + H(+). Its pathway is cofactor biosynthesis; coenzyme A biosynthesis; CoA from (R)-pantothenate: step 1/5. This chain is Pantothenate kinase, found in Streptococcus pyogenes serotype M5 (strain Manfredo).